A 406-amino-acid polypeptide reads, in one-letter code: UPF0754 membrane protein Cyan7425_4067 (406 aa).

The helical transmembrane segment at 381–401 (IVTLGGVLGLLIGIAQSVLLL) threads the bilayer.

Belongs to the UPF0754 family.

The protein localises to the cell inner membrane. The sequence is that of UPF0754 membrane protein Cyan7425_4067 from Cyanothece sp. (strain PCC 7425 / ATCC 29141).